The sequence spans 317 residues: Transcription factor MYB35 (317 aa).

HTH myb-type domains are found at residues Lys-9–Leu-65 and Lys-66–Leu-116. 2 consecutive DNA-binding regions (H-T-H motif) follow at residues Trp-37–Leu-61 and Trp-89–Leu-112.

Inflorescences-specific. Accumulates in anthers, especially in tapetum and meiocytes/microsporocytes and microspores during anther development.

Its subcellular location is the nucleus. Functionally, required for anther development and early tapetal function during microspore maturation. Regulates callose dissolution required for microspores release from the tetrads. The sequence is that of Transcription factor MYB35 from Arabidopsis thaliana (Mouse-ear cress).